A 617-amino-acid chain; its full sequence is KIF-binding protein (617 aa).

The disordered stretch occupies residues 48-83 (ALLGPAPEDDDERAADDGPVDQALGAGEPRDAEGPG). Position 174 is a phosphoserine (Ser174).

It belongs to the KIF-binding protein family. As to quaternary structure, interacts with KIF1B; positively regulates KIF1B microtubule motor activity. Interacts with STMN2.

It localises to the cytoplasm. Its subcellular location is the cytoskeleton. In terms of biological role, activator of KIF1B plus-end-directed microtubule motor activity. Required for organization of axonal microtubules, and axonal outgrowth and maintenance during peripheral and central nervous system development. This chain is KIF-binding protein (Kifbp), found in Rattus norvegicus (Rat).